The chain runs to 1217 residues: ATP-dependent RNA helicase DHX30 (1217 aa).

Phosphoserine is present on residues D15 and S29. The DRBM domain occupies 76-144 (PKNLLNSVIG…QAAAAACQLF (69 aa)). The disordered stretch occupies residues 176–223 (WWRPEPTMPPTSWRQLNPENIRPGGPAGLSRSLGREEEEDEEEELEEG). Acidic residues predominate over residues 211–223 (EEEEDEEEELEEG). 2 positions are modified to phosphoserine: S249 and S403. Positions 467-635 (LSAIEQHPVV…FGGCPVIKVP (169 aa)) constitute a Helicase ATP-binding domain. 480-487 (GDTGCGKT) serves as a coordination point for ATP. A DEAH box motif is present at residues 582–585 (DEVH). In terms of domain architecture, Helicase C-terminal spans 677 to 850 (LVTDLVLHID…NLVLQAKIHM (174 aa)).

This sequence belongs to the DEAD box helicase family. DEAH subfamily. As to quaternary structure, identified in a complex with TFAM and SSBP1. Interacts (via N-terminus) with ZC3HAV1 (via N-terminal domain) in an RNA-independent manner. Found in a complex with GRSF1, DDX28, FASTKD2 and FASTKD5. Phosphorylated on Ser-15. As to expression, expressed in the heart, brain, spleen, lung, liver, skeletal muscle, kidney, and testis. Expression is strongest in the testis and brain, while the lowest levels of expression are found in the spleen and lung.

The protein resides in the cytoplasm. The protein localises to the mitochondrion. Its subcellular location is the mitochondrion matrix. It is found in the mitochondrion nucleoid. The enzyme catalyses ATP + H2O = ADP + phosphate + H(+). Its function is as follows. RNA-dependent helicase. Plays an important role in the assembly of the mitochondrial large ribosomal subunit. Required for optimal function of the zinc-finger antiviral protein ZC3HAV1. Associates with mitochondrial DNA. Involved in nervous system development and differentiation through its involvement in the up-regulation of a number of genes which are required for neurogenesis, including GSC, NCAM1, neurogenin, and NEUROD. The polypeptide is ATP-dependent RNA helicase DHX30 (Dhx30) (Mus musculus (Mouse)).